A 205-amino-acid polypeptide reads, in one-letter code: Latherin (205 aa).

Cysteines 133 and 176 form a disulfide.

This sequence belongs to the BPI/LBP/Plunc superfamily. Plunc family. In terms of assembly, monomer.

The protein localises to the secreted. Its function is as follows. Major protein in sweat, has surfactant properties. The chain is Latherin (LATH) from Equus quagga burchellii (Burchell's zebra).